The chain runs to 343 residues: Holliday junction branch migration complex subunit RuvB (343 aa).

Residues 4–184 form a large ATPase domain (RuvB-L) region; it reads SDRLISAKAG…FGIVQRLEFY (181 aa). ATP is bound by residues Ile-23, Arg-24, Gly-65, Lys-68, Thr-69, Thr-70, 131-133, Arg-174, Tyr-184, and Arg-221; that span reads EDY. Thr-69 contributes to the Mg(2+) binding site. A small ATPAse domain (RuvB-S) region spans residues 185–255; sequence NHQDLTHIIT…IADQALNMLK (71 aa). The segment at 258 to 343 is head domain (RuvB-H); sequence SQGFDHMDRR…RSGREDDLFE (86 aa). DNA-binding residues include Arg-294, Arg-313, and Arg-318.

It belongs to the RuvB family. In terms of assembly, homohexamer. Forms an RuvA(8)-RuvB(12)-Holliday junction (HJ) complex. HJ DNA is sandwiched between 2 RuvA tetramers; dsDNA enters through RuvA and exits via RuvB. An RuvB hexamer assembles on each DNA strand where it exits the tetramer. Each RuvB hexamer is contacted by two RuvA subunits (via domain III) on 2 adjacent RuvB subunits; this complex drives branch migration. In the full resolvosome a probable DNA-RuvA(4)-RuvB(12)-RuvC(2) complex forms which resolves the HJ.

The protein localises to the cytoplasm. The enzyme catalyses ATP + H2O = ADP + phosphate + H(+). Functionally, the RuvA-RuvB-RuvC complex processes Holliday junction (HJ) DNA during genetic recombination and DNA repair, while the RuvA-RuvB complex plays an important role in the rescue of blocked DNA replication forks via replication fork reversal (RFR). RuvA specifically binds to HJ cruciform DNA, conferring on it an open structure. The RuvB hexamer acts as an ATP-dependent pump, pulling dsDNA into and through the RuvAB complex. RuvB forms 2 homohexamers on either side of HJ DNA bound by 1 or 2 RuvA tetramers; 4 subunits per hexamer contact DNA at a time. Coordinated motions by a converter formed by DNA-disengaged RuvB subunits stimulates ATP hydrolysis and nucleotide exchange. Immobilization of the converter enables RuvB to convert the ATP-contained energy into a lever motion, pulling 2 nucleotides of DNA out of the RuvA tetramer per ATP hydrolyzed, thus driving DNA branch migration. The RuvB motors rotate together with the DNA substrate, which together with the progressing nucleotide cycle form the mechanistic basis for DNA recombination by continuous HJ branch migration. Branch migration allows RuvC to scan DNA until it finds its consensus sequence, where it cleaves and resolves cruciform DNA. The sequence is that of Holliday junction branch migration complex subunit RuvB from Marinobacter nauticus (strain ATCC 700491 / DSM 11845 / VT8) (Marinobacter aquaeolei).